We begin with the raw amino-acid sequence, 415 residues long: FXa-directed anticoagulant (415 aa).

Residues 1 to 17 (MYLKIVILVTFPLVCFT) form the signal peptide. Asparagine 117, asparagine 166, asparagine 216, and asparagine 320 each carry an N-linked (GlcNAc...) asparagine glycan.

The protein belongs to the serpin family. As to quaternary structure, (Microbial infection) Interacts with Zika virus envelope protein E and Zika virus-like particles; the interaction does not affect Zika virus replication in human endothelial cells and keratinocytes. Post-translationally, the N-terminus is blocked. Female salivary gland (at protein level). Not detected in female carcass without head and salivary glands. Not detected in male tissues.

It localises to the secreted. Anticoagulant serpin-type protein inhibiting host coagulation factor Xa (F10). Does not inhibit host thrombin (F2) and trypsin. Its function is as follows. (Microbial infection) Does not affect Zika virus replication in human endothelial cells and keratinocytes. The polypeptide is FXa-directed anticoagulant (Aedes aegypti (Yellowfever mosquito)).